A 369-amino-acid polypeptide reads, in one-letter code: Maltose/maltodextrin import ATP-binding protein MalK (369 aa).

Residues 4-234 (VTLHNVSKAY…PVNRFVASFI (231 aa)) form the ABC transporter domain. 36-43 (GPSGCGKS) contributes to the ATP binding site.

This sequence belongs to the ABC transporter superfamily. Maltooligosaccharide importer (TC 3.A.1.1.1) family. In terms of assembly, the complex is composed of two ATP-binding proteins (MalK), two transmembrane proteins (MalG and MalK) and a solute-binding protein (MalE).

Its subcellular location is the cell inner membrane. The enzyme catalyses D-maltose(out) + ATP + H2O = D-maltose(in) + ADP + phosphate + H(+). Functionally, part of the ABC transporter complex MalEFGK involved in maltose/maltodextrin import. Responsible for energy coupling to the transport system. This chain is Maltose/maltodextrin import ATP-binding protein MalK, found in Photorhabdus laumondii subsp. laumondii (strain DSM 15139 / CIP 105565 / TT01) (Photorhabdus luminescens subsp. laumondii).